The primary structure comprises 186 residues: Dynactin subunit 3 (186 aa).

Alanine 2 carries the post-translational modification N-acetylalanine.

This sequence belongs to the dynactin subunit 3 family. In terms of assembly, subunit of dynactin, a multiprotein complex part of a tripartite complex with dynein and a adapter, such as BICDL1, BICD2 or HOOK3. The dynactin complex is built around ACTR1A/ACTB filament and consists of an actin-related filament composed of a shoulder domain, a pointed end and a barbed end. Its length is defined by its flexible shoulder domain. The soulder is composed of 2 DCTN1 subunits, 4 DCTN2 and 2 DCTN3. The 4 DCNT2 (via N-terminus) bind the ACTR1A filament and act as molecular rulers to determine the length. The pointed end is important for binding dynein-dynactin cargo adapters. Consists of 4 subunits: ACTR10, DCNT4, DCTN5 and DCTN6. The barbed end is composed of a CAPZA1:CAPZB heterodimers, which binds ACTR1A/ACTB filament and dynactin and stabilizes dynactin.

The protein resides in the cytoplasm. It is found in the cytoskeleton. It localises to the microtubule organizing center. The protein localises to the centrosome. Its subcellular location is the chromosome. The protein resides in the centromere. It is found in the kinetochore. It localises to the spindle. The protein localises to the cleavage furrow. Its subcellular location is the midbody. Its function is as follows. Part of the dynactin complex that activates the molecular motor dynein for ultra-processive transport along microtubules. Together with dynein is involved in spindle assembly and cytokinesis. The polypeptide is Dynactin subunit 3 (Sus scrofa (Pig)).